The following is a 369-amino-acid chain: Naringenin,2-oxoglutarate 3-dioxygenase (369 aa).

The 105-residue stretch at 193–297 (CVDMDQKVVV…RLSIATFQNP (105 aa)) folds into the Fe2OG dioxygenase domain. Residues His220, Asp222, and His278 each contribute to the Fe cation site. Residue Arg288 participates in 2-oxoglutarate binding.

It belongs to the iron/ascorbate-dependent oxidoreductase family. Fe(2+) serves as cofactor. The cofactor is L-ascorbate.

The catalysed reaction is a (2S)-flavan-4-one + 2-oxoglutarate + O2 = a (2R,3R)-dihydroflavonol + succinate + CO2. The protein operates within secondary metabolite biosynthesis; flavonoid biosynthesis. Functionally, catalyzes the 3-beta-hydroxylation of 2S-flavanones to 2R,3R-dihydroflavonols which are intermediates in the biosynthesis of flavonols, anthocyanidins, catechins and proanthocyanidins in plants. This chain is Naringenin,2-oxoglutarate 3-dioxygenase (AN3), found in Petunia hybrida (Petunia).